The chain runs to 331 residues: High-affinity nickel-transport protein NixA (331 aa).

Residues 1–5 lie on the Cytoplasmic side of the membrane; that stretch reads MKLWF. Residues 6 to 26 traverse the membrane as a helical segment; sequence PYFLAIVFLHALGLALLFMAN. Residues 27-33 lie on the Periplasmic side of the membrane; it reads NASFYAA. The helical transmembrane segment at 34 to 54 threads the bilayer; it reads ASMAYMLGAKHAFDADHIACI. The Cytoplasmic segment spans residues 55–66; sequence DNTIRKLTQQGK. A helical membrane pass occupies residues 67-87; that stretch reads NAYGVGFYFSMGHSSVVILMT. Topologically, residues 88 to 113 are periplasmic; it reads IISAFAIAWAKEHTPMLEEIGGVVGT. A helical transmembrane segment spans residues 114 to 135; that stretch reads LVSGLFLLIIGLLNAIILLDLL. At 136-178 the chain is on the cytoplasmic side; sequence KIFKKSHSNESLSQQQNEEIERLLTSRGLLNRFFKPLFNFVSK. Residues 179 to 199 form a helical membrane-spanning segment; that stretch reads SWHIYPIGFLFGLGFDTASEI. Residues 200–225 are Periplasmic-facing; that stretch reads ALLALSSSAIKVSMVGMLSLPILFAA. The helical transmembrane segment at 226–246 threads the bilayer; sequence GMSLFDTLDGAFMLKAYDWAF. Over 247–252 the chain is Cytoplasmic; that stretch reads KTPLRK. A helical transmembrane segment spans residues 253–273; that stretch reads IYYNISITALSVFIALFIGLI. Over 274–302 the chain is Periplasmic; the sequence is ELFQVVSEKLHLKFENRLLRALQSLEFTD. A helical membrane pass occupies residues 303-322; sequence LGYYLVGLFVIAFLGSFFLW. The Cytoplasmic portion of the chain corresponds to 323-331; sequence KIKFSKLES.

Belongs to the NiCoT transporter (TC 2.A.52) family.

The protein resides in the cell inner membrane. Functionally, high-affinity nickel intake protein. Imports nickel ions in an energy-dependent fashion. Necessary for the expression of catalytically active urease. The protein is High-affinity nickel-transport protein NixA (nixA) of Helicobacter pylori (strain ATCC 700392 / 26695) (Campylobacter pylori).